A 275-amino-acid chain; its full sequence is Large ribosomal subunit protein uL2 (275 aa).

The interval 224–275 is disordered; the sequence is AMNPVDHPHGGGEGKAPIGHPGPLTPWGKPALGYKTRKKGKASDKFIIRRRK. Residues 264–275 show a composition bias toward basic and acidic residues; the sequence is KASDKFIIRRRK.

It belongs to the universal ribosomal protein uL2 family. Part of the 50S ribosomal subunit. Forms a bridge to the 30S subunit in the 70S ribosome.

In terms of biological role, one of the primary rRNA binding proteins. Required for association of the 30S and 50S subunits to form the 70S ribosome, for tRNA binding and peptide bond formation. It has been suggested to have peptidyltransferase activity; this is somewhat controversial. Makes several contacts with the 16S rRNA in the 70S ribosome. The sequence is that of Large ribosomal subunit protein uL2 from Thermoanaerobacter pseudethanolicus (strain ATCC 33223 / 39E) (Clostridium thermohydrosulfuricum).